A 931-amino-acid polypeptide reads, in one-letter code: Envelope glycoprotein B (931 aa).

The N-terminal stretch at methionine 1–serine 71 is a signal peptide. The Virion surface portion of the chain corresponds to valine 72–proline 786. 5 cysteine pairs are disulfide-bonded: cysteine 122–cysteine 584, cysteine 139–cysteine 540, cysteine 213–cysteine 277, cysteine 369–cysteine 417, and cysteine 608–cysteine 645. Residue asparagine 147 is glycosylated (N-linked (GlcNAc...) asparagine; by host). The involved in fusion and/or binding to host membrane stretch occupies residues alanine 179–tyrosine 185. Asparagine 257 carries N-linked (GlcNAc...) asparagine; by host glycosylation. The involved in fusion and/or binding to host membrane stretch occupies residues glycine 264 to threonine 271. N-linked (GlcNAc...) asparagine; by host glycans are attached at residues asparagine 435, asparagine 503, asparagine 620, and asparagine 686. Hydrophobic membrane proximal region stretches follow at residues isoleucine 731–serine 784 and valine 764–serine 784. A helical membrane pass occupies residues phenylalanine 787 to tyrosine 807. At arginine 808 to valine 931 the chain is on the intravirion side. The short motif at tyrosine 881–leucine 884 is the Golgi targeting element. The Internalization motif signature appears at tyrosine 920 to valine 923.

This sequence belongs to the herpesviridae glycoprotein B family. Homotrimer; disulfide-linked. Binds to heparan sulfate proteoglycans. Interacts with gH/gL heterodimer. In terms of processing, a proteolytic cleavage by host furin generates two subunits that remain linked by disulfide bonds.

Its subcellular location is the virion membrane. It is found in the host cell membrane. It localises to the host endosome membrane. The protein localises to the host Golgi apparatus membrane. Functionally, envelope glycoprotein that forms spikes at the surface of virion envelope. Essential for the initial attachment to heparan sulfate moieties of the host cell surface proteoglycans. Involved in fusion of viral and cellular membranes leading to virus entry into the host cell. Following initial binding to its host receptors, membrane fusion is mediated by the fusion machinery composed at least of gB and the heterodimer gH/gL. May be involved in the fusion between the virion envelope and the outer nuclear membrane during virion egress. This chain is Envelope glycoprotein B, found in Varicella-zoster virus (strain Oka vaccine) (HHV-3).